A 228-amino-acid chain; its full sequence is Cytochrome c oxidase subunit 2 (228 aa).

Residues 1–14 (MPHASQLSLQEAMG) lie on the Mitochondrial intermembrane side of the membrane. The helical transmembrane segment at 15–45 (PTMEEVIFLHDHVLLLTCLMTMVITMFTLTA) threads the bilayer. Residues 46 to 59 (TTTALTHNDPTEEV) lie on the Mitochondrial matrix side of the membrane. A helical transmembrane segment spans residues 60–87 (EQLEAAWTVAPIMILILTALPSVRSLYL). The Mitochondrial intermembrane portion of the chain corresponds to 88–228 (MEEVFNPYLT…HFEQWLISEQ (141 aa)). Residues His162, Cys197, Glu199, Cys201, His205, and Met208 each contribute to the Cu cation site. Position 199 (Glu199) interacts with Mg(2+).

Belongs to the cytochrome c oxidase subunit 2 family. As to quaternary structure, component of the cytochrome c oxidase (complex IV, CIV), a multisubunit enzyme composed of 14 subunits. The complex is composed of a catalytic core of 3 subunits MT-CO1, MT-CO2 and MT-CO3, encoded in the mitochondrial DNA, and 11 supernumerary subunits COX4I, COX5A, COX5B, COX6A, COX6B, COX6C, COX7A, COX7B, COX7C, COX8 and NDUFA4, which are encoded in the nuclear genome. The complex exists as a monomer or a dimer and forms supercomplexes (SCs) in the inner mitochondrial membrane with NADH-ubiquinone oxidoreductase (complex I, CI) and ubiquinol-cytochrome c oxidoreductase (cytochrome b-c1 complex, complex III, CIII), resulting in different assemblies (supercomplex SCI(1)III(2)IV(1) and megacomplex MCI(2)III(2)IV(2)). Found in a complex with TMEM177, COA6, COX18, COX20, SCO1 and SCO2. Interacts with TMEM177 in a COX20-dependent manner. Interacts with COX20. Interacts with COX16. Requires Cu cation as cofactor.

It is found in the mitochondrion inner membrane. It catalyses the reaction 4 Fe(II)-[cytochrome c] + O2 + 8 H(+)(in) = 4 Fe(III)-[cytochrome c] + 2 H2O + 4 H(+)(out). Its function is as follows. Component of the cytochrome c oxidase, the last enzyme in the mitochondrial electron transport chain which drives oxidative phosphorylation. The respiratory chain contains 3 multisubunit complexes succinate dehydrogenase (complex II, CII), ubiquinol-cytochrome c oxidoreductase (cytochrome b-c1 complex, complex III, CIII) and cytochrome c oxidase (complex IV, CIV), that cooperate to transfer electrons derived from NADH and succinate to molecular oxygen, creating an electrochemical gradient over the inner membrane that drives transmembrane transport and the ATP synthase. Cytochrome c oxidase is the component of the respiratory chain that catalyzes the reduction of oxygen to water. Electrons originating from reduced cytochrome c in the intermembrane space (IMS) are transferred via the dinuclear copper A center (CU(A)) of subunit 2 and heme A of subunit 1 to the active site in subunit 1, a binuclear center (BNC) formed by heme A3 and copper B (CU(B)). The BNC reduces molecular oxygen to 2 water molecules using 4 electrons from cytochrome c in the IMS and 4 protons from the mitochondrial matrix. The polypeptide is Cytochrome c oxidase subunit 2 (MT-CO2) (Lycodon semicarinatus (Ryukyu odd-tooth snake)).